The following is a 358-amino-acid chain: Feruloyl esterase B (358 aa).

The N-terminal stretch at 1-18 is a signal peptide; that stretch reads MAIPLVLLLAWLLPTVFA. Residues 19 to 291 are catalytic; that stretch reads ASLTQVSNFG…VSVVLDWFGI (273 aa). Serine 136 serves as the catalytic Charge relay system. Asparagine 179 and asparagine 246 each carry an N-linked (GlcNAc...) asparagine glycan. The segment at 292–321 is gly/Thr-rich linker; the sequence is TGGGGGNGGGSGSTTTTTSATTTSTGPTGG. Residues 297–318 form a disordered region; that stretch reads GNGGGSGSTTTTTSATTTSTGP. Residues 304 to 318 are compositionally biased toward low complexity; the sequence is STTTTTSATTTSTGP. The 37-residue stretch at 322 to 358 folds into the CBM1 domain; it reads CTAAHWDQCGGNGYTGCTSCASPYTCQKVNDYYSQCL.

This sequence belongs to the carbohydrate esterase 1 (CE1) family. Feruloyl esterase type B subfamily.

The protein resides in the secreted. It catalyses the reaction feruloyl-polysaccharide + H2O = ferulate + polysaccharide.. Functionally, involved in degradation of plant cell walls. Hydrolyzes the feruloyl-arabinose ester bond in arabinoxylans as well as the feruloyl-galactose and feruloyl-arabinose ester bonds in pectin. Active against methyl esters of caffeate (MCA), but not sinapate (MSA). The polypeptide is Feruloyl esterase B (faeB) (Talaromyces stipitatus (strain ATCC 10500 / CBS 375.48 / QM 6759 / NRRL 1006) (Penicillium stipitatum)).